The primary structure comprises 191 residues: Holliday junction branch migration complex subunit RuvA (191 aa).

A domain I region spans residues 1–64 (MIGKLTGTLL…EDAQLLYGFA (64 aa)). The segment at 65 to 140 (TAPERQAFRA…KLGADLGASH (76 aa)) is domain II. The interval 140-142 (HGP) is flexible linker. A domain III region spans residues 143 to 191 (AVSGAQADILQALLALGYNDKEAAAALKALPAQVEVSDGIKWALKALTK).

This sequence belongs to the RuvA family. As to quaternary structure, homotetramer. Forms an RuvA(8)-RuvB(12)-Holliday junction (HJ) complex. HJ DNA is sandwiched between 2 RuvA tetramers; dsDNA enters through RuvA and exits via RuvB. An RuvB hexamer assembles on each DNA strand where it exits the tetramer. Each RuvB hexamer is contacted by two RuvA subunits (via domain III) on 2 adjacent RuvB subunits; this complex drives branch migration. In the full resolvosome a probable DNA-RuvA(4)-RuvB(12)-RuvC(2) complex forms which resolves the HJ.

The protein resides in the cytoplasm. Functionally, the RuvA-RuvB-RuvC complex processes Holliday junction (HJ) DNA during genetic recombination and DNA repair, while the RuvA-RuvB complex plays an important role in the rescue of blocked DNA replication forks via replication fork reversal (RFR). RuvA specifically binds to HJ cruciform DNA, conferring on it an open structure. The RuvB hexamer acts as an ATP-dependent pump, pulling dsDNA into and through the RuvAB complex. HJ branch migration allows RuvC to scan DNA until it finds its consensus sequence, where it cleaves and resolves the cruciform DNA. This is Holliday junction branch migration complex subunit RuvA from Verminephrobacter eiseniae (strain EF01-2).